A 232-amino-acid polypeptide reads, in one-letter code: Cytidylate kinase (232 aa).

An ATP-binding site is contributed by 15-23 (GPAGAGKST). Residues 164–192 (KEDPPPISQGQLAAEMKERDMRDSTRADA) form a disordered region. The segment covering 178-189 (EMKERDMRDSTR) has biased composition (basic and acidic residues).

Belongs to the cytidylate kinase family. Type 1 subfamily.

It is found in the cytoplasm. It catalyses the reaction CMP + ATP = CDP + ADP. The enzyme catalyses dCMP + ATP = dCDP + ADP. The chain is Cytidylate kinase from Solibacter usitatus (strain Ellin6076).